Here is a 494-residue protein sequence, read N- to C-terminus: MTVRTRVAPSPTGDPHVGTAYIALFNRCFAQQHGGQFILRIEDTDQTRSTDQSEQMILDSLKWLGLTWDEGPDVGGPHGPYRQSERKGIYRQYAEQLIEKGHAFKCYRTSEELDALRAGLKESGENRALKPSDLELPADEQAKREADGAPYVIRMRVPTEGRCEIHDMLRGPVELDWALVDAQILLKSDGMPTYHLANIVDDHLMEITHVIRGEEWLNSAPKHKLLYEYFGWEMPVLCHMPLLRNPDKSKLSKRKNPTSILFYQRMGYLPEALVNYLGRMGWSMPDESEKFSLTQMQEAFDIQRVSLGGPVFDVEKLSWLNGQWLREQSDEQFLDSLLDWAFNRDYAMKIIPHLRQRVETLSEVADKAAFCFNGMPAISEASFEHKQYSADDIKVWLQYLLWTYEARNDWNREGLFADAKAIADALEVKIKDFLFPVFIAIAGTSASFSVVDSMEIIGSDISRARIRHAIEVLGGVSKKQMKKLEKAYRDLPVG.

Positions 9–19 match the 'HIGH' region motif; that stretch reads PSPTGDPHVGT. Positions 250-254 match the 'KMSKS' region motif; that stretch reads KLSKR. Position 253 (Lys-253) interacts with ATP.

It belongs to the class-I aminoacyl-tRNA synthetase family. Glutamate--tRNA ligase type 1 subfamily. Monomer.

The protein resides in the cytoplasm. The catalysed reaction is tRNA(Glu) + L-glutamate + ATP = L-glutamyl-tRNA(Glu) + AMP + diphosphate. Catalyzes the attachment of glutamate to tRNA(Glu) in a two-step reaction: glutamate is first activated by ATP to form Glu-AMP and then transferred to the acceptor end of tRNA(Glu). This Alcanivorax borkumensis (strain ATCC 700651 / DSM 11573 / NCIMB 13689 / SK2) protein is Glutamate--tRNA ligase.